The primary structure comprises 130 residues: Large ribosomal subunit protein eL32 (130 aa).

This sequence belongs to the eukaryotic ribosomal protein eL32 family.

The chain is Large ribosomal subunit protein eL32 (rpl32e) from Pyrococcus horikoshii (strain ATCC 700860 / DSM 12428 / JCM 9974 / NBRC 100139 / OT-3).